A 127-amino-acid polypeptide reads, in one-letter code: Glycine cleavage system H protein (127 aa).

In terms of domain architecture, Lipoyl-binding spans 24–105 (TALVGITDFA…YEDGWMVKVS (82 aa)). K65 bears the N6-lipoyllysine mark.

It belongs to the GcvH family. As to quaternary structure, the glycine cleavage system is composed of four proteins: P, T, L and H. The cofactor is (R)-lipoate.

Its function is as follows. The glycine cleavage system catalyzes the degradation of glycine. The H protein shuttles the methylamine group of glycine from the P protein to the T protein. This Prosthecochloris aestuarii (strain DSM 271 / SK 413) protein is Glycine cleavage system H protein.